Consider the following 120-residue polypeptide: Ribosome-binding factor A (120 aa).

The protein belongs to the RbfA family. As to quaternary structure, monomer. Binds 30S ribosomal subunits, but not 50S ribosomal subunits or 70S ribosomes.

It is found in the cytoplasm. Functionally, one of several proteins that assist in the late maturation steps of the functional core of the 30S ribosomal subunit. Associates with free 30S ribosomal subunits (but not with 30S subunits that are part of 70S ribosomes or polysomes). Required for efficient processing of 16S rRNA. May interact with the 5'-terminal helix region of 16S rRNA. This chain is Ribosome-binding factor A, found in Chlamydia felis (strain Fe/C-56) (Chlamydophila felis).